We begin with the raw amino-acid sequence, 263 residues long: R-spondin-1 (263 aa).

The signal sequence occupies residues 1–20 (MRLGLCVVALVLSWTHLTIS). 2 FU repeats span residues 34–85 (AEGS…GYFD) and 91–135 (MNKC…GSSA). Intrachain disulfides connect C40-C47, C44-C53, C56-C75, C79-C94, C97-C105, C102-C111, C114-C125, C129-C142, C148-C190, C159-C166, and C199-C206. N137 is a glycosylation site (N-linked (GlcNAc...) asparagine). Residues 147-207 (QCEMSEWSPW…RCTVRRVPCP (61 aa)) enclose the TSP type-1 domain. C-linked (Man) tryptophan glycans are attached at residues W153 and W156. The tract at residues 206-263 (CPEGQKRRKGGQGRRENANRNLARKESKEAGAGSRRRKGQQQQQQQGTVGPLTSAGPA) is disordered. The span at 218 to 234 (GRRENANRNLARKESKE) shows a compositional bias: basic and acidic residues.

Belongs to the R-spondin family. In terms of assembly, interacts with the extracellular domain of FZD8 and LRP6. It however does not form a ternary complex with FZD8 and LRP6. Interacts with WNT1. Binds heparin. Interacts with ZNRF3; promoting indirect interaction between ZNRF3 and LGR4 and membrane clearance of ZNRF3. Interacts with LGR4, LGR5 and LGR6. Identified in a complex composed of RNF43, LGR5 and RSPO1. Interacts (via FU repeats) with KREM1. C-, and N-glycosylated. N-glycosylation at Asn-137, negatively influences its secretion and enhancing effect on Wnt/beta-catenin signaling. C-mannosylation at Trp-156 by DPY19L3 is required for its secretion and regulates the enhancing activity of Wnt signaling. Abundantly expressed in adrenal glands, ovary, testis, thyroid and trachea but not in bone marrow, spinal cord, stomach, leukocytes colon, small intestine, prostate, thymus and spleen.

It localises to the secreted. The protein resides in the nucleus. Activator of the canonical Wnt signaling pathway by acting as a ligand for LGR4-6 receptors. Upon binding to LGR4-6 (LGR4, LGR5 or LGR6), LGR4-6 associate with phosphorylated LRP6 and frizzled receptors that are activated by extracellular Wnt receptors, triggering the canonical Wnt signaling pathway to increase expression of target genes. Also regulates the canonical Wnt/beta-catenin-dependent pathway and non-canonical Wnt signaling by acting as an inhibitor of ZNRF3, an important regulator of the Wnt signaling pathway. Acts as a ligand for frizzled FZD8 and LRP6. May negatively regulate the TGF-beta pathway. Has a essential roles in ovary determination. Regulates Wnt signaling by antagonizing DKK1/KREM1-mediated internalization of LRP6 through an interaction with KREM1. In Homo sapiens (Human), this protein is R-spondin-1 (RSPO1).